A 291-amino-acid polypeptide reads, in one-letter code: Verruculogen synthase (291 aa).

Residue tyrosine 68 is part of the active site.

This sequence belongs to the PhyH family. In terms of assembly, homodimer. It depends on Fe cation as a cofactor.

It carries out the reaction fumitremorgin B + 2-oxoglutarate + AH2 + 2 O2 = verruculogen + succinate + A + CO2 + H2O. It functions in the pathway mycotoxin biosynthesis. Functionally, verruculogen synthase; part of the gene cluster that mediates the biosynthesis of fumitremorgins, indole alkaloids that carry not only intriguing chemical structures, but also interesting biological and pharmacological activities. The biosynthesis of fumitremorgin-type alkaloids begins by condensation of the two amino acids L-tryptophan and L-proline to brevianamide F, catalyzed by the non-ribosomal peptide synthetase ftmA. Brevianamide F is then prenylated by the prenyltransferase ftmPT1/ftmB in the presence of dimethylallyl diphosphate, resulting in the formation of tryprostatin B. The three cytochrome P450 monooxygenases, ftmP450-1/ftmC, ftmP450-2/ftmE and ftmP450-3/FtmG, are responsible for the conversion of tryprostatin B to 6-hydroxytryprostatin B, tryprostatin A to fumitremorgin C and fumitremorgin C to 12,13-dihydroxyfumitremorgin C, respectively. The putative methyltransferase ftmMT/ftmD is expected for the conversion of 6-hydroxytryprostatin B to tryprostatin A. FtmPT2/FtmH catalyzes the prenylation of 12,13-dihydroxyfumitre-morgin C in the presence of dimethylallyl diphosphate, resulting in the formation of fumitremorgin B. Fumitremorgin B is further converted to verruculogen by ftmOx1/ftmF via the insertion of an endoperoxide bond between the two prenyl moieties. In some fungal species, verruculogen is further converted to fumitremorgin A, but the enzymes involved in this step have not been identified yet. This Aspergillus fumigatus (strain ATCC MYA-4609 / CBS 101355 / FGSC A1100 / Af293) (Neosartorya fumigata) protein is Verruculogen synthase.